The following is a 148-amino-acid chain: Large ribosomal subunit protein uL13 (148 aa).

The protein belongs to the universal ribosomal protein uL13 family. As to quaternary structure, part of the 50S ribosomal subunit.

Functionally, this protein is one of the early assembly proteins of the 50S ribosomal subunit, although it is not seen to bind rRNA by itself. It is important during the early stages of 50S assembly. The chain is Large ribosomal subunit protein uL13 from Oenococcus oeni (strain ATCC BAA-331 / PSU-1).